Consider the following 300-residue polypeptide: tRNA dimethylallyltransferase (300 aa).

Position 11 to 18 (11 to 18 (GPTAVGKS)) interacts with ATP. Residue 13 to 18 (TAVGKS) participates in substrate binding. Residues 35-38 (DSIQ) form an interaction with substrate tRNA region.

Belongs to the IPP transferase family. In terms of assembly, monomer. It depends on Mg(2+) as a cofactor.

It catalyses the reaction adenosine(37) in tRNA + dimethylallyl diphosphate = N(6)-dimethylallyladenosine(37) in tRNA + diphosphate. In terms of biological role, catalyzes the transfer of a dimethylallyl group onto the adenine at position 37 in tRNAs that read codons beginning with uridine, leading to the formation of N6-(dimethylallyl)adenosine (i(6)A). The protein is tRNA dimethylallyltransferase of Borreliella afzelii (strain PKo) (Borrelia afzelii).